Reading from the N-terminus, the 343-residue chain is Heat-inducible transcription repressor HrcA (343 aa).

The protein belongs to the HrcA family.

Functionally, negative regulator of class I heat shock genes (grpE-dnaK-dnaJ and groELS operons). Prevents heat-shock induction of these operons. The sequence is that of Heat-inducible transcription repressor HrcA from Mycolicibacterium gilvum (strain PYR-GCK) (Mycobacterium gilvum (strain PYR-GCK)).